The sequence spans 759 residues: Phosphoribosylformylglycinamidine synthase subunit PurL (759 aa).

The active site involves His-61. Positions 64 and 105 each coordinate ATP. Mg(2+) is bound at residue Glu-107. Residues 108–111 and Arg-130 contribute to the substrate site; that span reads SHNH. His-109 acts as the Proton acceptor in catalysis. Residue Asp-131 participates in Mg(2+) binding. A substrate-binding site is contributed by Gln-260. Residue Asp-288 coordinates Mg(2+). 332–334 lines the substrate pocket; sequence ESQ. 2 residues coordinate ATP: Asp-520 and Gly-557. Asn-558 contacts Mg(2+). Ser-560 contributes to the substrate binding site.

This sequence belongs to the FGAMS family. In terms of assembly, monomer. Part of the FGAM synthase complex composed of 1 PurL, 1 PurQ and 2 PurS subunits.

It is found in the cytoplasm. The catalysed reaction is N(2)-formyl-N(1)-(5-phospho-beta-D-ribosyl)glycinamide + L-glutamine + ATP + H2O = 2-formamido-N(1)-(5-O-phospho-beta-D-ribosyl)acetamidine + L-glutamate + ADP + phosphate + H(+). It participates in purine metabolism; IMP biosynthesis via de novo pathway; 5-amino-1-(5-phospho-D-ribosyl)imidazole from N(2)-formyl-N(1)-(5-phospho-D-ribosyl)glycinamide: step 1/2. Its function is as follows. Part of the phosphoribosylformylglycinamidine synthase complex involved in the purines biosynthetic pathway. Catalyzes the ATP-dependent conversion of formylglycinamide ribonucleotide (FGAR) and glutamine to yield formylglycinamidine ribonucleotide (FGAM) and glutamate. The FGAM synthase complex is composed of three subunits. PurQ produces an ammonia molecule by converting glutamine to glutamate. PurL transfers the ammonia molecule to FGAR to form FGAM in an ATP-dependent manner. PurS interacts with PurQ and PurL and is thought to assist in the transfer of the ammonia molecule from PurQ to PurL. In Thermoplasma acidophilum (strain ATCC 25905 / DSM 1728 / JCM 9062 / NBRC 15155 / AMRC-C165), this protein is Phosphoribosylformylglycinamidine synthase subunit PurL.